We begin with the raw amino-acid sequence, 189 residues long: Elongation factor P (189 aa).

The protein belongs to the elongation factor P family.

It localises to the cytoplasm. The protein operates within protein biosynthesis; polypeptide chain elongation. In terms of biological role, involved in peptide bond synthesis. Stimulates efficient translation and peptide-bond synthesis on native or reconstituted 70S ribosomes in vitro. Probably functions indirectly by altering the affinity of the ribosome for aminoacyl-tRNA, thus increasing their reactivity as acceptors for peptidyl transferase. This Campylobacter fetus subsp. fetus (strain 82-40) protein is Elongation factor P.